Consider the following 80-residue polypeptide: Sulfur carrier protein TusA (80 aa).

The active-site Cysteine persulfide intermediate is the Cys17.

The protein belongs to the sulfur carrier protein TusA family.

Its subcellular location is the cytoplasm. In terms of biological role, sulfur carrier protein which probably makes part of a sulfur-relay system. This Pseudomonas putida (strain GB-1) protein is Sulfur carrier protein TusA.